The primary structure comprises 456 residues: RuvB-like helicase 1 (456 aa).

70 to 77 (GPPGTGKT) serves as a coordination point for ATP.

Belongs to the RuvB family. Forms homohexameric rings. May form a dodecamer with rept made of two stacked hexameric rings. Component of the chromatin remodeling Ino80 complex.

The protein resides in the nucleus. It catalyses the reaction ATP + H2O = ADP + phosphate + H(+). Acts as a transcriptional coactivator in Wg signaling. Functionally, proposed core component of the chromatin remodeling Ino80 complex which is involved in transcriptional regulation, DNA replication and probably DNA repair. The polypeptide is RuvB-like helicase 1 (Aedes aegypti (Yellowfever mosquito)).